Reading from the N-terminus, the 954-residue chain is Glycine dehydrogenase (decarboxylating) (954 aa).

Lys704 is modified (N6-(pyridoxal phosphate)lysine).

It belongs to the GcvP family. As to quaternary structure, the glycine cleavage system is composed of four proteins: P, T, L and H. Pyridoxal 5'-phosphate serves as cofactor.

It carries out the reaction N(6)-[(R)-lipoyl]-L-lysyl-[glycine-cleavage complex H protein] + glycine + H(+) = N(6)-[(R)-S(8)-aminomethyldihydrolipoyl]-L-lysyl-[glycine-cleavage complex H protein] + CO2. Functionally, the glycine cleavage system catalyzes the degradation of glycine. The P protein binds the alpha-amino group of glycine through its pyridoxal phosphate cofactor; CO(2) is released and the remaining methylamine moiety is then transferred to the lipoamide cofactor of the H protein. In Allorhizobium ampelinum (strain ATCC BAA-846 / DSM 112012 / S4) (Agrobacterium vitis (strain S4)), this protein is Glycine dehydrogenase (decarboxylating).